A 192-amino-acid polypeptide reads, in one-letter code: MRIGLLGGSFNPPHQAHRAISLFALKRLQLDRVWWLVTPGNPLKDNGGLHALAERAAAARKVAADPRIEISCLESVIGTRYTADTIDYLRRRASRLRFVWIMGADNLAQFHRWQKWQHIAAQVPIAVVDRPPRSFRALNAPAARALARYRVAEADASRLADRAAPAWVYLTGLKMSLSSTGLRNPDGSWKSF.

It belongs to the NadD family.

It carries out the reaction nicotinate beta-D-ribonucleotide + ATP + H(+) = deamido-NAD(+) + diphosphate. Its pathway is cofactor biosynthesis; NAD(+) biosynthesis; deamido-NAD(+) from nicotinate D-ribonucleotide: step 1/1. In terms of biological role, catalyzes the reversible adenylation of nicotinate mononucleotide (NaMN) to nicotinic acid adenine dinucleotide (NaAD). The polypeptide is Probable nicotinate-nucleotide adenylyltransferase (Bradyrhizobium sp. (strain ORS 278)).